The following is a 21-amino-acid chain: Brevinin-1OKb (21 aa).

Lysine 21 bears the Lysine amide mark.

In terms of tissue distribution, expressed by the skin glands.

It localises to the secreted. Its function is as follows. Antimicrobial peptide. The sequence is that of Brevinin-1OKb from Nidirana okinavana (Kampira Falls frog).